A 261-amino-acid chain; its full sequence is Thioesterase AMT4 (261 aa).

It belongs to the AMT4 thioesterase family.

Its pathway is mycotoxin biosynthesis. In terms of biological role, thioesterase; part of the gene clusters that mediate the biosynthesis of AM-toxins, host-selective toxins (HSTs) causing Alternaria blotch on apple, a worldwide distributed disease. AM-toxins are cyclic depsipeptides containing the 3 residues 2-hydroxy-isovaleric acid (2-HIV), dehydroalanine, L-alanine which are common for all 3 AM-toxins I to III. The fourth precursor is L-alpha-amino-methoxyphenyl-valeric acid (L-Amv) for AM-toxin I, L-alpha-amino-phenyl-valeric acid (L-Apv) for AM-toxin II, and L-alpha-amino-hydroxyphenyl-valeric acid (L-Ahv) for AM-toxin III. AM-toxins have two target sites for affecting susceptible apple cells; they cause invagination of the plasma membrane and electrolyte loss and chloroplast disorganization. The non-ribosomal peptide synthetase AMT1 contains 4 catalytic modules and is responsible for activation of each residue in AM-toxin. The aldo-keto reductase AMT2 catalyzes the conversion of 2-keto-isovaleric acid (2-KIV) to 2-hydroxy-isovaleric acid (2-HIV), one of the precursor residues incorporated by AMT1 during AM-toxin biosynthesis, by reduction of its ketone to an alcohol. The cytochrome P450 monooxygenase AMT3 and the thioesterase AMT4 are also important for AM-toxin production, but their exact function within the AM-toxin biosynthesis are not known yet. Up to 21 proteins (including AMT1 to AMT4) are predicted to be involved in AM-toxin biosynthesis since their expression ishighly up-regulated in AM-toxin-producing cultures. The polypeptide is Thioesterase AMT4 (Alternaria alternata (Alternaria rot fungus)).